A 189-amino-acid polypeptide reads, in one-letter code: Threonylcarbamoyl-AMP synthase (189 aa).

Residues 6-189 (SPAFESVLTA…ALTGELYRQG (184 aa)) form the YrdC-like domain.

It belongs to the SUA5 family. TsaC subfamily.

It is found in the cytoplasm. The enzyme catalyses L-threonine + hydrogencarbonate + ATP = L-threonylcarbamoyladenylate + diphosphate + H2O. In terms of biological role, required for the formation of a threonylcarbamoyl group on adenosine at position 37 (t(6)A37) in tRNAs that read codons beginning with adenine. Catalyzes the conversion of L-threonine, HCO(3)(-)/CO(2) and ATP to give threonylcarbamoyl-AMP (TC-AMP) as the acyladenylate intermediate, with the release of diphosphate. The polypeptide is Threonylcarbamoyl-AMP synthase (Photorhabdus laumondii subsp. laumondii (strain DSM 15139 / CIP 105565 / TT01) (Photorhabdus luminescens subsp. laumondii)).